The chain runs to 270 residues: Probable feruloyl esterase C (270 aa).

The N-terminal stretch at 1 to 22 (MAILSRLLTTVTLGSLLTSAVA) is a signal peptide.

It belongs to the faeC family.

It is found in the secreted. The enzyme catalyses feruloyl-polysaccharide + H2O = ferulate + polysaccharide.. Functionally, involved in degradation of plant cell walls. Hydrolyzes the feruloyl-arabinose ester bond in arabinoxylans, and the feruloyl-galactose ester bond in pectin. Active against paranitrophenyl-acetate, methyl ferulate and wheat arabinoxylan. The chain is Probable feruloyl esterase C (faeC) from Aspergillus terreus (strain NIH 2624 / FGSC A1156).